We begin with the raw amino-acid sequence, 157 residues long: Transmembrane protein 42 (157 aa).

Transmembrane regions (helical) follow at residues 37 to 57 (FWGVFNCLCAGAFGALAAAAA), 67 to 87 (IGLCVLGIVAMASANSLMWTF), 100 to 120 (IASVTVTFSNILCSAILGYLL), and 124 to 144 (CQEILWWGGVFLILCGLTLIH).

The protein resides in the membrane. The chain is Transmembrane protein 42 (Tmem42) from Mus musculus (Mouse).